We begin with the raw amino-acid sequence, 522 residues long: 2-isopropylmalate synthase (522 aa).

Residues 5-267 (VIIFDTTLRD…ETGINAKEIH (263 aa)) form the Pyruvate carboxyltransferase domain. The Mn(2+) site is built by D14, H202, H204, and N238. Residues 392–522 (QLQQLVVQSD…MHKNRELGGV (131 aa)) form a regulatory domain region.

It belongs to the alpha-IPM synthase/homocitrate synthase family. LeuA type 1 subfamily. In terms of assembly, homodimer. Requires Mn(2+) as cofactor.

The protein localises to the cytoplasm. The enzyme catalyses 3-methyl-2-oxobutanoate + acetyl-CoA + H2O = (2S)-2-isopropylmalate + CoA + H(+). It functions in the pathway amino-acid biosynthesis; L-leucine biosynthesis; L-leucine from 3-methyl-2-oxobutanoate: step 1/4. Catalyzes the condensation of the acetyl group of acetyl-CoA with 3-methyl-2-oxobutanoate (2-ketoisovalerate) to form 3-carboxy-3-hydroxy-4-methylpentanoate (2-isopropylmalate). This is 2-isopropylmalate synthase from Shewanella sp. (strain ANA-3).